Here is a 373-residue protein sequence, read N- to C-terminus: Putative protein YfkA (373 aa).

Residues 26 to 256 (YGDMQLTNVE…DIRDENTWML (231 aa)) enclose the Radical SAM core domain. The [4Fe-4S] cluster site is built by cysteine 42, cysteine 46, and cysteine 49.

The protein belongs to the radical SAM superfamily. [4Fe-4S] cluster is required as a cofactor.

The sequence is that of Putative protein YfkA (yfkA) from Bacillus subtilis (strain 168).